Consider the following 277-residue polypeptide: Ras suppressor protein 1 (277 aa).

Positions 1–23 are disordered; that stretch reads MSKSLKKLVEESREKNQPEVDMS. Residue Ser2 is modified to N-acetylserine. Residues 7 to 23 show a composition bias toward basic and acidic residues; sequence KLVEESREKNQPEVDMS. LRR repeat units lie at residues 41–63, 64–85, 87–109, 110–133, 135–156, 158–179, and 181–202; these read HITQLVLSHNKLTTVPPNIAELK, NLEVLNFFNNQIEELPTQISSL, KLKHLNLGMNRLNTLPRGFGSLP, ALEVLDLTYNNLNENSLPGNFFYL, TLRALYLSDNDFEILPPDIGKL, KLQILSLRDNDLISLPKEIGEL, and QLKELHIQGNRLTVLPPELGNL. The segment at 250 to 277 is disordered; that stretch reads MQANPEPPKKNNDKSKKISRKPLAAKNK. A compositionally biased stretch (basic and acidic residues) spans 256-265; that stretch reads PPKKNNDKSK.

Potentially plays a role in the Ras signal transduction pathway. Capable of suppressing v-Ras transformation in vitro. The polypeptide is Ras suppressor protein 1 (RSU1) (Bos taurus (Bovine)).